The chain runs to 470 residues: GDP-Man:Man(3)GlcNAc(2)-PP-Dol alpha-1,2-mannosyltransferase (470 aa).

Residues 1–15 (MSDTVISLISHSITT) lie on the Lumenal side of the membrane. A helical membrane pass occupies residues 16 to 36 (VFYLVPLIIALIIPFSLYSGF). The Cytoplasmic portion of the chain corresponds to 37-131 (RRKSKTVAFF…HYKHCTMLFQ (95 aa)). Positions 132–152 (ALAGLILALEAWFRMVPAVFI) form an intramembrane region, helical. The Cytoplasmic segment spans residues 153–378 (DSMGYPLSLP…ISIHTMHNEH (226 aa)). Positions 379-399 (FGISVVEAMAASTIILSNDSG) form an intramembrane region, helical. Residues 400 to 470 (GPRMDIVKDY…HWNKEIEKVL (71 aa)) lie on the Cytoplasmic side of the membrane.

This sequence belongs to the glycosyltransferase group 1 family. Glycosyltransferase 4 subfamily.

The protein resides in the endoplasmic reticulum membrane. The enzyme catalyses an alpha-D-Man-(1-&gt;3)-[alpha-D-Man-(1-&gt;6)]-beta-D-Man-(1-&gt;4)-beta-D-GlcNAc-(1-&gt;4)-alpha-D-GlcNAc-diphospho-di-trans,poly-cis-dolichol + 2 GDP-alpha-D-mannose = an alpha-D-Man-(1-&gt;2)-alpha-D-Man-(1-&gt;2)-alpha-D-Man-(1-&gt;3)-[alpha-D-Man-(1-&gt;6)]-beta-D-Man-(1-&gt;4)-beta-D-GlcNAc-(1-&gt;4)-alpha-D-GlcNAc-diphospho-di-trans,poly-cis-dolichol + 2 GDP + 2 H(+). It participates in protein modification; protein glycosylation. Its function is as follows. GDP-Man:Man(3)GlcNAc(2)-PP-Dol alpha-1,2-mannosyltransferase that operates in the biosynthetic pathway of dolichol-linked oligosaccharides, the glycan precursors employed in protein asparagine (N)-glycosylation. The assembly of dolichol-linked oligosaccharides begins on the cytosolic side of the endoplasmic reticulum membrane and finishes in its lumen. The sequential addition of sugars to dolichol pyrophosphate produces dolichol-linked oligosaccharides containing fourteen sugars, including two GlcNAcs, nine mannoses and three glucoses. Once assembled, the oligosaccharide is transferred from the lipid to nascent proteins by oligosaccharyltransferases. Catalyzes, on the cytoplasmic face of the endoplasmic reticulum, the addition of the fourth and fifth mannose residues to the dolichol-linked oligosaccharide chain, to produce Man(5)GlcNAc(2)-PP-dolichol core oligosaccharide. Man(5)GlcNAc(2)-PP-dolichol is a substrate for ALG3, the following enzyme in the biosynthetic pathway. The sequence is that of GDP-Man:Man(3)GlcNAc(2)-PP-Dol alpha-1,2-mannosyltransferase from Caenorhabditis elegans.